The sequence spans 88 residues: Phosphocarrier protein HPr (88 aa).

Positions 1–88 (MEKREFNIIA…DTMKKEGLAE (88 aa)) constitute an HPr domain. Catalysis depends on H15, which acts as the Pros-phosphohistidine intermediate. S46 bears the Phosphoserine; by HPrK/P mark.

This sequence belongs to the HPr family.

It localises to the cytoplasm. Phosphorylation on Ser-46 inhibits the phosphoryl transfer from enzyme I to HPr. In terms of biological role, general (non sugar-specific) component of the phosphoenolpyruvate-dependent sugar phosphotransferase system (sugar PTS). This major carbohydrate active-transport system catalyzes the phosphorylation of incoming sugar substrates concomitantly with their translocation across the cell membrane. The phosphoryl group from phosphoenolpyruvate (PEP) is transferred to the phosphoryl carrier protein HPr by enzyme I. Phospho-HPr then transfers it to the PTS EIIA domain. P-Ser-HPr interacts with the catabolite control protein A (CcpA), forming a complex that binds to DNA at the catabolite response elements cre, operator sites preceding a large number of catabolite-regulated genes. Thus, P-Ser-HPr is a corepressor in carbon catabolite repression (CCR), a mechanism that allows bacteria to coordinate and optimize the utilization of available carbon sources. P-Ser-HPr also plays a role in inducer exclusion, in which it probably interacts with several non-PTS permeases and inhibits their transport activity. The sequence is that of Phosphocarrier protein HPr (ptsH) from Lacticaseibacillus casei (Lactobacillus casei).